We begin with the raw amino-acid sequence, 792 residues long: Phenylalanine--tRNA ligase beta subunit (792 aa).

The 109-residue stretch at 39–147 folds into the tRNA-binding domain; the sequence is GEALDLILVA…EDAPIGTPLA (109 aa). A B5 domain is found at 400 to 475; that stretch reads PAPASILLRR…RIRGYEHLPT (76 aa). Residues Asp453, Asp459, Glu462, and Glu463 each contribute to the Mg(2+) site. Residues 698 to 791 form the FDX-ACB domain; sequence SRFPFVRRDL…IQQRHDVRIR (94 aa).

This sequence belongs to the phenylalanyl-tRNA synthetase beta subunit family. Type 1 subfamily. As to quaternary structure, tetramer of two alpha and two beta subunits. It depends on Mg(2+) as a cofactor.

It localises to the cytoplasm. It carries out the reaction tRNA(Phe) + L-phenylalanine + ATP = L-phenylalanyl-tRNA(Phe) + AMP + diphosphate + H(+). The chain is Phenylalanine--tRNA ligase beta subunit from Xylella fastidiosa (strain Temecula1 / ATCC 700964).